A 200-amino-acid polypeptide reads, in one-letter code: MAVKRPVRVLVDMDGVLADFESGLLQGFRRRFPEEPHVPLEQRRGFLANEQYGALRPDLAEKVASVYESPGFFLNLEPIPGALDALREMNDMKDTEVFICTTPLLKYDHCVGEKYRWVEQNLGPEFVERIILTRDKTVVMGDLLIDDKDNIQGLEETPSWEHILFTCCHNQHLALPPTRRRLLSWSDNWRGIIESKRASL.

Residue D12 is the Nucleophile of the active site. D12 and D14 together coordinate Mg(2+). Residue D14 is the Proton donor of the active site. The substrate site is built by F20, F46, Y67, and T101. T102 carries the phosphothreonine modification. Position 136 (K136) interacts with substrate. Residue D147 participates in Mg(2+) binding. A Phosphoserine modification is found at S184.

Belongs to the 5'(3')-deoxyribonucleotidase family. In terms of assembly, homodimer. Mg(2+) serves as cofactor.

The protein localises to the cytoplasm. Functionally, dephosphorylates the 5' and 2'(3')-phosphates of deoxyribonucleotides, with a preference for dUMP and dTMP, intermediate activity towards dGMP, and low activity towards dCMP and dAMP. The sequence is that of 5'(3')-deoxyribonucleotidase, cytosolic type (Nt5c) from Mus musculus (Mouse).